Here is a 362-residue protein sequence, read N- to C-terminus: 2-aminoethylphosphonate--pyruvate transaminase (362 aa).

Lys193 is subject to N6-(pyridoxal phosphate)lysine.

This sequence belongs to the class-V pyridoxal-phosphate-dependent aminotransferase family. PhnW subfamily. In terms of assembly, homodimer. Pyridoxal 5'-phosphate is required as a cofactor.

The enzyme catalyses (2-aminoethyl)phosphonate + pyruvate = phosphonoacetaldehyde + L-alanine. In terms of biological role, involved in phosphonate degradation. This chain is 2-aminoethylphosphonate--pyruvate transaminase, found in Bacteroides fragilis (strain ATCC 25285 / DSM 2151 / CCUG 4856 / JCM 11019 / LMG 10263 / NCTC 9343 / Onslow / VPI 2553 / EN-2).